We begin with the raw amino-acid sequence, 241 residues long: Probable transcriptional regulatory protein azo0574 (241 aa).

A disordered region spans residues 1–21 (MAGHSKWANIQHRKGRQDAKR).

It belongs to the TACO1 family.

The protein resides in the cytoplasm. This Azoarcus sp. (strain BH72) protein is Probable transcriptional regulatory protein azo0574.